We begin with the raw amino-acid sequence, 404 residues long: Probable tRNA sulfurtransferase (404 aa).

One can recognise a THUMP domain in the interval 60–165 (QPVAESLKQI…EEAAYISYET (106 aa)). Residues 183–184 (ML), 208–209 (HF), arginine 265, glycine 287, and glutamine 296 contribute to the ATP site.

This sequence belongs to the ThiI family.

The protein resides in the cytoplasm. The catalysed reaction is [ThiI sulfur-carrier protein]-S-sulfanyl-L-cysteine + a uridine in tRNA + 2 reduced [2Fe-2S]-[ferredoxin] + ATP + H(+) = [ThiI sulfur-carrier protein]-L-cysteine + a 4-thiouridine in tRNA + 2 oxidized [2Fe-2S]-[ferredoxin] + AMP + diphosphate. It carries out the reaction [ThiS sulfur-carrier protein]-C-terminal Gly-Gly-AMP + S-sulfanyl-L-cysteinyl-[cysteine desulfurase] + AH2 = [ThiS sulfur-carrier protein]-C-terminal-Gly-aminoethanethioate + L-cysteinyl-[cysteine desulfurase] + A + AMP + 2 H(+). Its pathway is cofactor biosynthesis; thiamine diphosphate biosynthesis. In terms of biological role, catalyzes the ATP-dependent transfer of a sulfur to tRNA to produce 4-thiouridine in position 8 of tRNAs, which functions as a near-UV photosensor. Also catalyzes the transfer of sulfur to the sulfur carrier protein ThiS, forming ThiS-thiocarboxylate. This is a step in the synthesis of thiazole, in the thiamine biosynthesis pathway. The sulfur is donated as persulfide by IscS. The chain is Probable tRNA sulfurtransferase from Streptococcus sanguinis (strain SK36).